Consider the following 660-residue polypeptide: MEHIRTPKVENVRLVDRVSPKKAALGTLYLTATHVIFVENSPDPRKETWILHSQISTIEKQATTATGCPLLIRCKNFQIIQLIIPQERDCHDVYISLIRLARPVKYEELYCFSFNPMLDKEEREQGWVLIDLSEEYTRMGLPNHYWQLSDVNRDYRVCDSYPTELYVPKSATAHIIVGSSKFRSRRRFPVLSYYYKDNHASICRSSQPLSGFSARCLEDEQMLQAIRKANPGSDFVYVVDTRPKLNAMANRAAGKGYENEDNYSNIKFQFIGIENIHVMRNSLQKMLEVCELKSPSMSDFLWGLENSGWLRHIKAIMDAGIFIAKAVSEEGASVLVHCSDGWDRTAQVCSVASLLLDPHYRTLKGFMVLIEKDWISFGHKFNHRYGNLDGDPKEISPVIDQFIECVWQLMEQFPCAFEFNERFLIHIQHHIYSCQFGNFLCNSQKERRELKIQERTYSLWAHLWKNRADYLNPLFRADHSQTQGTLHLPTTPCNFMYKFWSGMYNRFEKGMQPRQSVTDYLMAVKEETQQLEEELEALEERLEKIQKVQLNCTKVKSKQSEPSKHSGFSTSDNSIANTPQDYSGNMKSFPSRSPSQGDEDSALILTQDNLKSSDPDLSANSDQESGVEDLSCRSPSGGEHAPSEDSGKDRDSDEAVFLTA.

A Myotubularin phosphatase domain is found at 126–504 (GWVLIDLSEE…FMYKFWSGMY (379 aa)). 3 residues coordinate a 1,2-diacyl-sn-glycero-3-phospho-(1D-myo-inositol-3-phosphate): N250, N275, and I276. C338 (phosphocysteine intermediate) is an active-site residue. Residues S339, D340, G341, W342, D343, R344, and R384 each coordinate a 1,2-diacyl-sn-glycero-3-phospho-(1D-myo-inositol-3-phosphate). A coiled-coil region spans residues 521 to 551 (LMAVKEETQQLEEELEALEERLEKIQKVQLN). Positions 554–660 (KVKSKQSEPS…DSDEAVFLTA (107 aa)) are disordered. Positions 566–596 (SGFSTSDNSIANTPQDYSGNMKSFPSRSPSQ) are enriched in polar residues. T578 carries the phosphothreonine modification. The span at 641–653 (APSEDSGKDRDSD) shows a compositional bias: basic and acidic residues.

This sequence belongs to the protein-tyrosine phosphatase family. Non-receptor class myotubularin subfamily. Heterodimer (via C-terminus) with MTMR9 (via coiled coil domain); the interaction enhances MTMR7 catalytic activity. Does not homodimerize. Interacts with RAB1B (in GDP-bound form). In terms of tissue distribution, expressed specifically in brain.

The protein resides in the cytoplasm. It localises to the endomembrane system. The catalysed reaction is a 1,2-diacyl-sn-glycero-3-phospho-(1D-myo-inositol-3-phosphate) + H2O = a 1,2-diacyl-sn-glycero-3-phospho-(1D-myo-inositol) + phosphate. It catalyses the reaction 1D-myo-inositol 1,3-bisphosphate + H2O = 1D-myo-inositol 1-phosphate + phosphate. With respect to regulation, interaction with MTMR9 increases phosphatase activity. Functionally, lipid phosphatase that specifically dephosphorylates the D-3 position of phosphatidylinositol 3-phosphate (PtdIns(3)P) and inositol 1,3-bisphosphate (Ins(1,3)P2). In Homo sapiens (Human), this protein is Phosphatidylinositol-3-phosphate phosphatase MTMR7.